The primary structure comprises 497 residues: Probable sensor kinase SilS (497 aa).

Topologically, residues 1–15 are cytoplasmic; that stretch reads MHSKPSRLPFSLALR. A helical membrane pass occupies residues 16-36; that stretch reads LTFFISLSTILAFIAFTWFML. At 37–186 the chain is on the periplasmic side; it reads HSVEKHFAEQ…HLHYLDALKK (150 aa). Residues 187–207 traverse the membrane as a helical segment; that stretch reads NLIAIAVVISLLIVLIIRIAV. Positions 208-261 constitute an HAMP domain; it reads RQGHLPLRNVSNAIKNITSENLDARLEPTRVPIELEQLVISFNHMIGKIEDVFT. The Cytoplasmic segment spans residues 208 to 497; that stretch reads RQGHLPLRNV…KMIPDTQCWE (290 aa). One can recognise a Histidine kinase domain in the interval 269 to 487; the sequence is DIAHEIRTPI…RFILSVPRLE (219 aa). At His-272 the chain carries Phosphohistidine; by autocatalysis.

Its subcellular location is the cell inner membrane. The catalysed reaction is ATP + protein L-histidine = ADP + protein N-phospho-L-histidine.. Its function is as follows. Component of the sil cation-efflux system that confers resistance to silver. Probable member of a two-component regulatory system SilS/SilR. May activate SilR by phosphorylation. This Salmonella typhimurium protein is Probable sensor kinase SilS (silS).